The primary structure comprises 1453 residues: Collagen alpha-1(I) chain (1453 aa).

The first 22 residues, 1–22 (MFSFVDLRLLLLLGATALLTHG), serve as a signal peptide directing secretion. A propeptide spans 23-151 (QEDIPEVSCI…PPGLGGNFAS (129 aa)) (N-terminal propeptide). The VWFC domain maps to 29-87 (VSCIHNGLRVPNGETWKPEVCLICICHNGTAVCDDVQCNEELDCPNPQRREGECCAFCP). N-linked (GlcNAc...) asparagine glycosylation is present at asparagine 56. Residues 94 to 1210 (NSEDVGVEGP…GGRYYRADDA (1117 aa)) form a disordered region. Composition is skewed to pro residues over residues 109 to 118 (PQGPRGPVGP) and 128 to 143 (PGLP…PGPP). A nonhelical region (N-terminal) region spans residues 152–167 (QMSYGYDEKSAGVSVP). Lysine 160 is modified (allysine). Position 161 is a phosphoserine (serine 161). The tract at residues 168 to 1181 (GPMGPSGPRG…PGPPGPPGPP (1014 aa)) is triple-helical region. 11 positions are modified to 4-hydroxyproline: proline 179, proline 182, proline 185, proline 194, proline 197, proline 200, proline 215, proline 230, proline 236, proline 245, and proline 251. The span at 198–207 (GEPGGSGPMG) shows a compositional bias: gly residues. Basic and acidic residues predominate over residues 218–232 (NGDDGEAGKPGRPGE). Lysine 254 carries the post-translational modification 5-hydroxylysine; alternate. Lysine 254 carries an O-linked (Gal...) hydroxylysine; alternate glycan. Serine 260 is modified (phosphoserine). Over residues 268–284 (DAGPAGPKGEPGSPGEN) the composition is skewed to low complexity. 5 positions are modified to 4-hydroxyproline: proline 278, proline 281, proline 287, proline 296, and proline 302. Residues 307–320 (TAGARGNDGAVGAA) are compositionally biased toward low complexity. Residues 322–334 (PPGPTGPTGPPGF) are compositionally biased toward pro residues. Proline 323, proline 332, proline 335, proline 362, proline 365, proline 377, proline 383, proline 392, proline 398, proline 401, and proline 416 each carry 4-hydroxyproline. Low complexity predominate over residues 368–407 (AGAAGPAGNPGADGQPGAKGANGAPGIAGAPGFPGARGPS). Lysine 419 is modified (5-hydroxylysine). A 4-hydroxyproline mark is found at proline 425, proline 428, proline 440, proline 449, proline 464, proline 470, proline 479, and proline 485. Over residues 474-483 (GERGGPGSRG) the composition is skewed to gly residues. Residue lysine 494 is modified to 5-hydroxylysine. The span at 499–515 (ERGAPGPAGPKGSPGEA) shows a compositional bias: low complexity. Residues proline 503, proline 512, proline 518, proline 524, proline 533, proline 536, proline 545, proline 554, proline 560, proline 572, proline 581, proline 590, proline 593, proline 611, proline 629, proline 635, proline 641, proline 647, proline 653, proline 659, proline 671, proline 680, proline 692, proline 704, proline 707, proline 713, proline 719, and proline 728 each carry the 4-hydroxyproline modification. Residues 527 to 566 (KGLTGSPGSPGPDGKTGPPGPAGQDGRPGPAGPPGARGQA) are compositionally biased toward low complexity. A compositionally biased stretch (low complexity) spans 623 to 650 (QGPAGSPGFQGLPGPAGPPGEAGKPGEQ). 2 stretches are compositionally biased toward low complexity: residues 685 to 695 (PRGNNGAPGND) and 703 to 716 (APGA…PGLQ). Positions 734–736 (RGD) match the Cell attachment site motif. Lysine 740 carries the post-translational modification 5-hydroxylysine. 3 positions are modified to 4-hydroxyproline: proline 746, proline 761, and proline 767. Serine 776 bears the Phosphoserine mark. 7 positions are modified to 4-hydroxyproline: proline 788, proline 797, proline 806, proline 812, proline 830, proline 839, and proline 848. Residues 800 to 815 (AGFAGPPGADGQPGAK) are compositionally biased toward low complexity. Residues 829-841 (PPGPAGPAGPPGP) show a composition bias toward pro residues. Residues 842–872 (IGNVGAPGPKGPRGAAGPPGATGFPGAAGRV) show a composition bias toward low complexity. Lysine 851 carries the 5-hydroxylysine modification. Proline 860 and proline 866 each carry 4-hydroxyproline. The residue at position 874 (proline 874) is a 3-hydroxyproline. 4-hydroxyproline occurs at positions 875, 884, 887, 908, 917, 926, 935, 953, 962, 965, 971, 986, 992, 998, 1007, and 1013. Positions 901-910 (ETGPAGRPGE) are enriched in low complexity. Residues 920 to 935 (AGEKGSPGADGPAGSP) are compositionally biased toward low complexity. Positions 985–995 (PPGPMGPPGLA) are enriched in pro residues. The segment covering 997-1012 (PPGESGREGSPGAEGS) has biased composition (low complexity). Lysine 1022 bears the 5-hydroxylysine mark. Pro residues predominate over residues 1031-1046 (AGPPGAPGAPGAPGPV). Residues proline 1034, proline 1037, and proline 1040 each carry the 4-hydroxyproline modification. The span at 1067 to 1081 (IGPAGARGPAGPQGP) shows a compositional bias: low complexity. Positions 1082–1084 (RGD) match the Cell attachment site motif. Basic and acidic residues predominate over residues 1082-1096 (RGDKGETGEQGDRGI). Lysine 1085 bears the 5-hydroxylysine mark. Lysine 1097 carries the 5-hydroxylysine; alternate modification. The O-linked (Gal...) hydroxylysine; alternate glycan is linked to lysine 1097. A compositionally biased stretch (low complexity) spans 1102 to 1148 (FSGLQGPPGSPGSPGEQGPSGASGPAGPRGPPGSAGSPGKDGLNGLP). 5 positions are modified to 4-hydroxyproline: proline 1109, proline 1112, proline 1115, proline 1133, and proline 1148. The residue at position 1153 (proline 1153) is a 3-hydroxyproline. Proline 1154 carries the 4-hydroxyproline modification. Over residues 1166-1181 (AGPPGPPGPPGPPGPP) the composition is skewed to pro residues. Proline 1168 bears the 3-hydroxyproline mark. Proline 1169 is subject to 4-hydroxyproline. Proline 1171 carries the 3-hydroxyproline modification. A 4-hydroxyproline modification is found at proline 1172. Proline 1174 bears the 3-hydroxyproline mark. Proline 1175, proline 1178, and proline 1181 each carry 4-hydroxyproline. The segment at 1182–1207 (SGGYDFSFLPQPPQEKSQDGGRYYRA) is nonhelical region (C-terminal). Allysine is present on lysine 1197. The span at 1197-1210 (KSQDGGRYYRADDA) shows a compositional bias: basic and acidic residues. A propeptide spans 1208 to 1453 (DDANVVRDRD…GLDIGPACFV (246 aa)) (C-terminal propeptide). The Fibrillar collagen NC1 domain maps to 1218-1453 (LEVDTTLKSL…GLDIGPACFV (236 aa)). Intrachain disulfides connect cysteine 1248-cysteine 1280, cysteine 1288-cysteine 1451, and cysteine 1359-cysteine 1404. Positions 1266, 1268, 1269, 1271, and 1274 each coordinate Ca(2+). A glycan (N-linked (GlcNAc...) asparagine) is linked at asparagine 1354.

The protein belongs to the fibrillar collagen family. Trimers of one alpha 2(I) and two alpha 1(I) chains. Interacts with MRC2. Interacts with TRAM2. Interacts with MFAP4 in a Ca (2+)-dependent manner. In terms of processing, contains mostly 4-hydroxyproline. Proline residues at the third position of the tripeptide repeating unit (G-X-Y) are hydroxylated in some or all of the chains. Post-translationally, contains 3-hydroxyproline at a few sites. This modification occurs on the first proline residue in the sequence motif Gly-Pro-Hyp, where Hyp is 4-hydroxyproline. Lysine residues at the third position of the tripeptide repeating unit (G-X-Y) are 5-hydroxylated in some or all of the chains. In terms of processing, O-glycosylated on hydroxylated lysine residues. The O-linked glycan consists of a Glc-Gal disaccharide. Forms the fibrils of tendon, ligaments and bones. In bones the fibrils are mineralized with calcium hydroxyapatite.

Its subcellular location is the secreted. It localises to the extracellular space. The protein resides in the extracellular matrix. In terms of biological role, type I collagen is a member of group I collagen (fibrillar forming collagen). This chain is Collagen alpha-1(I) chain, found in Mus musculus (Mouse).